We begin with the raw amino-acid sequence, 485 residues long: Probable WRKY transcription factor 10 (485 aa).

2 disordered regions span residues 43–62 and 215–293; these read IFPQESLPRDHTDQSGQRSG and ISIE…SKTQ. The span at 216–264 shows a compositional bias: acidic residues; that stretch reads SIEDSESEDGNKDDDDEDFQYEDEDEDQYDQDQDVDEDEEEEKDEDNVA. A DNA-binding region (WRKY) is located at residues 301–366; that stretch reads SDEDNPNDGY…YDGIHNHPSP (66 aa). Residues Cys332, Cys337, His361, and His363 each contribute to the Zn(2+) site. Residues 358–417 are disordered; the sequence is DGIHNHPSPPARRSNSSSRNRSAGATIPQNQNDRTSRLGRAPPTPTPPTPPPSSYTPEEM. Residues 368 to 380 show a composition bias toward low complexity; the sequence is ARRSNSSSRNRSA. A compositionally biased stretch (pro residues) spans 399–411; sequence PPTPTPPTPPPSS.

Belongs to the WRKY group I family. Interacts with IKU1. Expressed in male gametophytes (pollen) and in the endosperm of fertilized ovules.

Its subcellular location is the nucleus. Its function is as follows. Transcription factor. Interacts specifically with the W box (5'-(T)TGAC[CT]-3'), a frequently occurring elicitor-responsive cis-acting element. Modulates seed size by negatively regulating the cellularization of syncytial endosperm. This is Probable WRKY transcription factor 10 (WRKY10) from Arabidopsis thaliana (Mouse-ear cress).